A 218-amino-acid chain; its full sequence is LHFPL tetraspan subfamily member 3 protein (218 aa).

The next 4 helical transmembrane spans lie at 22-42, 96-116, 126-146, and 177-197; these read IGVL…VCFI, FFIG…GLFF, ICAW…MIFP, and ILAI…FVLG.

This sequence belongs to the LHFP family.

It localises to the membrane. This chain is LHFPL tetraspan subfamily member 3 protein, found in Xenopus laevis (African clawed frog).